A 617-amino-acid polypeptide reads, in one-letter code: Elongation factor 4 (617 aa).

The tr-type G domain maps to 17–198 (AIIRNFCIIA…KIVRDLPAPV (182 aa)). Residues 29 to 34 (DHGKST) and 145 to 148 (NKID) contribute to the GTP site.

It belongs to the TRAFAC class translation factor GTPase superfamily. Classic translation factor GTPase family. LepA subfamily.

Its subcellular location is the cell membrane. It catalyses the reaction GTP + H2O = GDP + phosphate + H(+). In terms of biological role, required for accurate and efficient protein synthesis under certain stress conditions. May act as a fidelity factor of the translation reaction, by catalyzing a one-codon backward translocation of tRNAs on improperly translocated ribosomes. Back-translocation proceeds from a post-translocation (POST) complex to a pre-translocation (PRE) complex, thus giving elongation factor G a second chance to translocate the tRNAs correctly. Binds to ribosomes in a GTP-dependent manner. The sequence is that of Elongation factor 4 from Arthrobacter sp. (strain FB24).